We begin with the raw amino-acid sequence, 676 residues long: Transketolase 7 (676 aa).

A substrate-binding site is contributed by H36. Thiamine diphosphate contacts are provided by residues H76 and 125-127 (GPL). D166 contacts Mg(2+). 2 residues coordinate thiamine diphosphate: G167 and N196. Residues N196 and I198 each contribute to the Mg(2+) site. H273, R367, and S394 together coordinate substrate. Position 273 (H273) interacts with thiamine diphosphate. Positions 421 and 448 each coordinate thiamine diphosphate. E421 functions as the Proton donor in the catalytic mechanism. Residues H472, D480, and R531 each coordinate substrate.

Belongs to the transketolase family. As to quaternary structure, homodimer. It depends on Mg(2+) as a cofactor. Ca(2+) is required as a cofactor. Mn(2+) serves as cofactor. The cofactor is Co(2+). Requires thiamine diphosphate as cofactor. As to expression, leaves and roots.

It carries out the reaction D-sedoheptulose 7-phosphate + D-glyceraldehyde 3-phosphate = aldehydo-D-ribose 5-phosphate + D-xylulose 5-phosphate. Its function is as follows. Could be involved in the conversion of sugars, which are a major phenomenon in the rehydration process. Catalyzes the transfer of a two-carbon ketol group from a ketose donor to an aldose acceptor, via a covalent intermediate with the cofactor thiamine pyrophosphate. The sequence is that of Transketolase 7 (TKT7) from Craterostigma plantagineum (Blue gem).